We begin with the raw amino-acid sequence, 567 residues long: Proline--tRNA ligase (567 aa).

It belongs to the class-II aminoacyl-tRNA synthetase family. ProS type 1 subfamily. As to quaternary structure, homodimer.

The protein resides in the cytoplasm. The catalysed reaction is tRNA(Pro) + L-proline + ATP = L-prolyl-tRNA(Pro) + AMP + diphosphate. In terms of biological role, catalyzes the attachment of proline to tRNA(Pro) in a two-step reaction: proline is first activated by ATP to form Pro-AMP and then transferred to the acceptor end of tRNA(Pro). As ProRS can inadvertently accommodate and process non-cognate amino acids such as alanine and cysteine, to avoid such errors it has two additional distinct editing activities against alanine. One activity is designated as 'pretransfer' editing and involves the tRNA(Pro)-independent hydrolysis of activated Ala-AMP. The other activity is designated 'posttransfer' editing and involves deacylation of mischarged Ala-tRNA(Pro). The misacylated Cys-tRNA(Pro) is not edited by ProRS. This is Proline--tRNA ligase from Geobacillus sp. (strain WCH70).